The primary structure comprises 509 residues: Transcription factor atf-7 (509 aa).

Positions 283–303 (TVSSYHSPLGASSQPPSTQKS) are enriched in polar residues. 2 disordered regions span residues 283–318 (TVSS…EKQI) and 337–400 (NMSS…ILER). Over residues 308–318 (SWDHINGEKQI) the composition is skewed to basic and acidic residues. Positions 337 to 364 (NMSSSGSDQDQSADMSNAGSTASTSTGN) are enriched in low complexity. Residues 390–400 (PDERRNTILER) show a composition bias toward basic and acidic residues. Positions 391–464 (DERRNTILER…TERESRCVCL (74 aa)) constitute a bZIP domain. The tract at residues 393-413 (RRNTILERNKAAAVRYRKRKK) is basic motif. The leucine-zipper stretch occupies residues 419–450 (MMGRVQAMEAEKNQLLAIQTQNQVLRRELERV).

It belongs to the bZIP family. As to quaternary structure, interacts with serine/threonine kinase pmk-1; perhaps in a manner dependent on dual specificity protein kinase sek-1. Expressed in intestinal cells.

The protein resides in the nucleus. Its subcellular location is the chromosome. Its function is as follows. Transcription factor which regulates the transcription of various genes, including those involved in innate immunity and oxidative stress responses. Binds to promoter regions of genes, probably at 5'-[GACGTCA]-3' consensus sequences. Together with transcription factor daf-19, involved in regulation of the serotonergic response of ADF neurons to pathogenic food. Modulates response to infection by the Gram-negative bacterium P.aeruginosa, acting downstream of the p38 signal transduction pathway effector serine/threonine kinase pmk-1. May act with transcription factor elt-2 to control p38 gene induction in response to bacterial infection. May be phosphorylated by pmk-1. Regulates transcription of the metallothionein gene, mtl-1, perhaps acting downstream of pmk-1. This is Transcription factor atf-7 from Caenorhabditis elegans.